The primary structure comprises 195 residues: Ethylene-responsive transcription factor ERF018 (195 aa).

A compositionally biased stretch (basic and acidic residues) spans 1 to 13 (MVKQAMKEEEKKR). The tract at residues 1–22 (MVKQAMKEEEKKRNTAMQSKYK) is disordered. Residues 20–77 (KYKGVRKRKWGKWVSEIRLPHSRERIWLGSYDTPEKAARAFDAAQFCLRGGDANFNFP) constitute a DNA-binding region (AP2/ERF).

It belongs to the AP2/ERF transcription factor family. ERF subfamily.

The protein resides in the nucleus. Probably acts as a transcriptional activator. Binds to the GCC-box pathogenesis-related promoter element. May be involved in the regulation of gene expression by stress factors and by components of stress signal transduction pathways. This is Ethylene-responsive transcription factor ERF018 (ERF018) from Arabidopsis thaliana (Mouse-ear cress).